Reading from the N-terminus, the 541-residue chain is Protein wntless homolog (541 aa).

The first 42 residues, 1–42, serve as a signal peptide directing secretion; sequence MAGAIIENMSTRKLCIVGGILLVFQVIAFLVGGLIAPSPTTA. Topologically, residues 43–232 are lumenal; it reads VPYMSVKCID…GIHQNGGFTK (190 aa). The chain crosses the membrane as a helical span at residues 233–253; it reads VWFAMKTFLTPSILIIMVWYW. The Cytoplasmic segment spans residues 254–268; it reads RRITLMTRAPVLLEK. Residues 269–289 traverse the membrane as a helical segment; the sequence is VIFALGISMTFINIPVEWFSI. The Lumenal portion of the chain corresponds to 290-303; it reads GFDWTWMLLFGDIR. A helical transmembrane segment spans residues 304 to 324; it reads QGIFYAMLLSFWIIFCGEHMM. The Cytoplasmic portion of the chain corresponds to 325-331; the sequence is DQNERNR. A helical membrane pass occupies residues 332-352; that stretch reads LSGYWKQVGPIAVGSFCLFIF. The Lumenal portion of the chain corresponds to 353–380; it reads DMCERGVQLKNPFYSIWTTEVGTELAMA. A helical transmembrane segment spans residues 381 to 401; the sequence is FIIVAGICLCLYFLFLCFMVF. Residues 402–431 are Cytoplasmic-facing; sequence QVFRNISGKQSSLPAMSKARRLHYEGLIFR. Residues 432–452 traverse the membrane as a helical segment; that stretch reads FKFLMLITLACAAMTVIFFIV. Residues 453–471 lie on the Lumenal side of the membrane; sequence SQVTEGHWKWGDITIQVNS. Residues 472 to 492 traverse the membrane as a helical segment; that stretch reads AFFTGIYGMWNLYVFALMFLY. The Cytoplasmic portion of the chain corresponds to 493–541; the sequence is APSHKNYGEDQSNGDLGVSSGEELQLTTTITHVDGPTEVYKLARKEAQE.

It belongs to the wntless family.

The protein localises to the golgi apparatus membrane. It is found in the cytoplasmic vesicle membrane. Its function is as follows. May play an essential role in Wnt signaling pathway. May be required for Wnt-dependent patterning processes. This is Protein wntless homolog (WLS) from Gallus gallus (Chicken).